The sequence spans 295 residues: Glycine N-acyltransferase-like protein Keg1 (295 aa).

Lysine 41 is subject to N6-acetyllysine; alternate. At lysine 41 the chain carries N6-succinyllysine; alternate. Lysine 43 is subject to N6-acetyllysine. Lysine 48 carries the N6-acetyllysine; alternate modification. Lysine 48 carries the post-translational modification N6-succinyllysine; alternate. N6-acetyllysine occurs at positions 80 and 83. Residues lysine 124, lysine 128, and lysine 140 each carry the N6-acetyllysine; alternate modification. An N6-succinyllysine; alternate mark is found at lysine 124, lysine 128, and lysine 140. Lysine 150 carries the N6-acetyllysine modification. N6-acetyllysine; alternate is present on lysine 255. N6-succinyllysine; alternate is present on lysine 255.

This sequence belongs to the glycine N-acyltransferase family. As to quaternary structure, binds to microtubules.

It localises to the cytoplasm. The protein localises to the cytoskeleton. It is found in the microtubule organizing center. Its subcellular location is the centrosome. It catalyses the reaction an acyl-CoA + glycine = an N-acylglycine + CoA + H(+). In terms of biological role, acyltransferase which transfers the acyl group to the N-terminus of glycine. Can conjugate a multitude of substrates to form a variety of N-acylglycines. The sequence is that of Glycine N-acyltransferase-like protein Keg1 (Keg1) from Mus musculus (Mouse).